Here is an 89-residue protein sequence, read N- to C-terminus: Small ribosomal subunit protein uS15 (89 aa).

This sequence belongs to the universal ribosomal protein uS15 family. In terms of assembly, part of the 30S ribosomal subunit. Forms a bridge to the 50S subunit in the 70S ribosome, contacting the 23S rRNA.

In terms of biological role, one of the primary rRNA binding proteins, it binds directly to 16S rRNA where it helps nucleate assembly of the platform of the 30S subunit by binding and bridging several RNA helices of the 16S rRNA. Functionally, forms an intersubunit bridge (bridge B4) with the 23S rRNA of the 50S subunit in the ribosome. This chain is Small ribosomal subunit protein uS15, found in Renibacterium salmoninarum (strain ATCC 33209 / DSM 20767 / JCM 11484 / NBRC 15589 / NCIMB 2235).